The primary structure comprises 528 residues: Putative galacturonosyltransferase 2 (528 aa).

It belongs to the glycosyltransferase 8 family.

Its pathway is glycan metabolism; pectin biosynthesis. Its function is as follows. May be involved in pectin and/or xylans biosynthesis in cell walls. The polypeptide is Putative galacturonosyltransferase 2 (GAUT2) (Arabidopsis thaliana (Mouse-ear cress)).